The primary structure comprises 243 residues: MSRAPLPLAAHERLIFALDVPSHDEAIAWVDRLGDSVAFYKIGMELLASGEYFHVLDALAKRDKRVFVDLKFFDIPATVAGTIRRLAQWPVSYCTVHGWHAGMLQAAADANHGAMRLLAVTVLTSMGRPDLAAMGIDREPVDVVVERALAAEAAGIDGVIASGQEAGPIRRATGPAFSIVCPGIRPGGPVADDQQRIVGVAQAFTDGADAIVVGRPIRLAADPAAAAAAIQAEILAAVGQDRS.

Residues D19, K41, 69–78, T124, R185, Q194, G214, and R215 contribute to the substrate site; that span reads DLKFFDIPAT. K71 acts as the Proton donor in catalysis.

Belongs to the OMP decarboxylase family. Type 1 subfamily. Homodimer.

It carries out the reaction orotidine 5'-phosphate + H(+) = UMP + CO2. It functions in the pathway pyrimidine metabolism; UMP biosynthesis via de novo pathway; UMP from orotate: step 2/2. Catalyzes the decarboxylation of orotidine 5'-monophosphate (OMP) to uridine 5'-monophosphate (UMP). This Xanthomonas oryzae pv. oryzae (strain MAFF 311018) protein is Orotidine 5'-phosphate decarboxylase.